The primary structure comprises 487 residues: 3-octaprenyl-4-hydroxybenzoate carboxy-lyase (487 aa).

Asn172 is a Mn(2+) binding site. Residues 175–177 (IYR), 189–191 (RWL), and 194–195 (RG) contribute to the prenylated FMN site. Glu238 contributes to the Mn(2+) binding site. Asp287 functions as the Proton donor in the catalytic mechanism.

It belongs to the UbiD family. Homohexamer. Prenylated FMN serves as cofactor. The cofactor is Mn(2+).

It localises to the cell membrane. The enzyme catalyses a 4-hydroxy-3-(all-trans-polyprenyl)benzoate + H(+) = a 2-(all-trans-polyprenyl)phenol + CO2. It functions in the pathway cofactor biosynthesis; ubiquinone biosynthesis. In terms of biological role, catalyzes the decarboxylation of 3-octaprenyl-4-hydroxy benzoate to 2-octaprenylphenol, an intermediate step in ubiquinone biosynthesis. This is 3-octaprenyl-4-hydroxybenzoate carboxy-lyase from Blochmanniella pennsylvanica (strain BPEN).